The following is a 315-amino-acid chain: Methionyl-tRNA formyltransferase (315 aa).

A (6S)-5,6,7,8-tetrahydrofolate-binding site is contributed by 109 to 112 (SLLP).

This sequence belongs to the Fmt family.

It carries out the reaction L-methionyl-tRNA(fMet) + (6R)-10-formyltetrahydrofolate = N-formyl-L-methionyl-tRNA(fMet) + (6S)-5,6,7,8-tetrahydrofolate + H(+). Its function is as follows. Attaches a formyl group to the free amino group of methionyl-tRNA(fMet). The formyl group appears to play a dual role in the initiator identity of N-formylmethionyl-tRNA by promoting its recognition by IF2 and preventing the misappropriation of this tRNA by the elongation apparatus. The sequence is that of Methionyl-tRNA formyltransferase from Lachnospira eligens (strain ATCC 27750 / DSM 3376 / VPI C15-48 / C15-B4) (Eubacterium eligens).